Here is a 453-residue protein sequence, read N- to C-terminus: 3-phosphoshikimate 1-carboxyvinyltransferase (453 aa).

Positions 1-12 (MDVNVTSSTVRG) are enriched in polar residues. The tract at residues 1–21 (MDVNVTSSTVRGTTRAPPSKS) is disordered. Lysine 20, serine 21, and arginine 25 together coordinate 3-phosphoshikimate. Phosphoenolpyruvate is bound at residue lysine 20. Phosphoenolpyruvate-binding residues include glycine 97 and arginine 125. Positions 170, 171, 172, 198, 330, and 357 each coordinate 3-phosphoshikimate. Glutamine 172 contributes to the phosphoenolpyruvate binding site. Catalysis depends on aspartate 330, which acts as the Proton acceptor. Phosphoenolpyruvate is bound by residues arginine 361 and arginine 404.

This sequence belongs to the EPSP synthase family. As to quaternary structure, monomer.

The protein resides in the cytoplasm. It catalyses the reaction 3-phosphoshikimate + phosphoenolpyruvate = 5-O-(1-carboxyvinyl)-3-phosphoshikimate + phosphate. It participates in metabolic intermediate biosynthesis; chorismate biosynthesis. Functionally, catalyzes the transfer of the enolpyruvyl moiety of phosphoenolpyruvate (PEP) to the 5-hydroxyl of shikimate-3-phosphate (S3P) to produce enolpyruvyl shikimate-3-phosphate and inorganic phosphate. The sequence is that of 3-phosphoshikimate 1-carboxyvinyltransferase from Halorubrum lacusprofundi (strain ATCC 49239 / DSM 5036 / JCM 8891 / ACAM 34).